The following is a 201-amino-acid chain: Superoxide dismutase [Mn] (201 aa).

Mn(2+) is bound by residues H27, H81, D163, and H167.

It belongs to the iron/manganese superoxide dismutase family. In terms of assembly, homodimer. Mn(2+) serves as cofactor.

The protein localises to the secreted. It catalyses the reaction 2 superoxide + 2 H(+) = H2O2 + O2. Functionally, destroys superoxide anion radicals which are normally produced within the cells and which are toxic to biological systems. In Streptococcus pyogenes, this protein is Superoxide dismutase [Mn] (sodA).